Reading from the N-terminus, the 783-residue chain is BMP/retinoic acid-inducible neural-specific protein 2 (783 aa).

Positions 1–33 (MRWPCSSRFRGLWPEAAPWAVLLALGVPGWVLA) are cleaved as a signal peptide. The MACPF domain occupies 85 to 281 (RYRIYREFAR…FVAAALSYIT (197 aa)). N-linked (GlcNAc...) asparagine glycans are attached at residues N185, N354, N473, N579, N626, and N658.

This sequence belongs to the BRINP family. Expressed in olfactory bulb, cerebellum and neuronal layers in hippocampus.

The protein localises to the secreted. Inhibits neuronal cell proliferation by negative regulation of the cell cycle transition. The polypeptide is BMP/retinoic acid-inducible neural-specific protein 2 (Brinp2) (Rattus norvegicus (Rat)).